A 774-amino-acid chain; its full sequence is Beta-xylosidase/alpha-L-arabinofuranosidase 2 (774 aa).

An N-terminal signal peptide occupies residues 1–33 (MASVENRTPNVSVFLCFFVLFATLLLSGGRVSS). N136 is a glycosylation site (N-linked (GlcNAc...) asparagine). Residue D303 is part of the active site. The N-linked (GlcNAc...) asparagine glycan is linked to N437.

This sequence belongs to the glycoside hydrolase 3 family.

Its subcellular location is the secreted. The protein localises to the extracellular space. It localises to the extracellular matrix. It catalyses the reaction Hydrolysis of (1-&gt;4)-beta-D-xylans, to remove successive D-xylose residues from the non-reducing termini.. The enzyme catalyses Hydrolysis of terminal non-reducing alpha-L-arabinofuranoside residues in alpha-L-arabinosides.. In terms of biological role, a bifunctional beta-xylosidase/alpha-L-arabinosidase, exo-enzyme that acts synergistically with endohydrolases. Releases xylose and arabinose from cell walls. The chain is Beta-xylosidase/alpha-L-arabinofuranosidase 2 from Medicago sativa subsp. varia (Alfalfa).